Here is a 156-residue protein sequence, read N- to C-terminus: Ribosomal RNA large subunit methyltransferase H (156 aa).

S-adenosyl-L-methionine contacts are provided by residues Leu-73, Gly-104, and 123–128; that span reads LSSLTL.

It belongs to the RNA methyltransferase RlmH family. As to quaternary structure, homodimer.

It localises to the cytoplasm. The enzyme catalyses pseudouridine(1915) in 23S rRNA + S-adenosyl-L-methionine = N(3)-methylpseudouridine(1915) in 23S rRNA + S-adenosyl-L-homocysteine + H(+). In terms of biological role, specifically methylates the pseudouridine at position 1915 (m3Psi1915) in 23S rRNA. In Neisseria gonorrhoeae (strain ATCC 700825 / FA 1090), this protein is Ribosomal RNA large subunit methyltransferase H.